The primary structure comprises 553 residues: MAFPELLDRVGGRGRFQLLQAVALVTPILWVTTQNMLENFSAAVPHHRCWVPLLDNSTSQASIPGDFGRDVLLAVSIPPGPDQRPHQCLRFRQPQWQLIESNTTATNWSDADTEPCEDGWVYDHSTFRSTIVTTWDLVCDSQALRPMAQSIFLAGILVGAAVCGHASDRFGRRRVLTWSYLLVSVSGTIAALMPTFPLYCLFRFLVASAVAGVMMNTASLLMEWTSAQAGPLMMTLNALGFSFGQVLTGSVAYGVRSWRMLQLAVSAPFFLFFVYSWWLPESARWLITVGRLDQSLRELQRVAAVNRRKAEADTLTVEVLRSAMQEEPNGNQAGARLGTLLHTPGLRLRTFISMLCWFAFGFTFYGLALDLQALGSNIFLLQALIGIVDLPVKMGSLLLLSRLGRRLCQASSLVLPGLCILANILVPREMGILRSSLAVLGLGSLGAAFTCVTIFSSELFPTVIRMTAVGLGQVAARGGAMLGPLVRLLGVYGSWLPLLVYGVVPVLSGLAALLLPETKNLPLPDTIQDIQKQSVKKVTHDIAGGSVLKSARL.

The chain crosses the membrane as a helical span at residues phenylalanine 16–methionine 36. Residues asparagine 56, asparagine 102, and asparagine 107 are each glycosylated (N-linked (GlcNAc...) asparagine). Transmembrane regions (helical) follow at residues proline 146–alanine 166, leucine 182–phenylalanine 202, phenylalanine 204–tryptophan 224, leucine 232–alanine 252, methionine 260–proline 280, phenylalanine 351–leucine 371, isoleucine 378–leucine 398, leucine 407–proline 427, serine 435–phenylalanine 455, methionine 466–valine 486, and tryptophan 495–leucine 515. Serine 534 is subject to Phosphoserine.

It belongs to the major facilitator (TC 2.A.1) superfamily. Organic cation transporter (TC 2.A.1.19) family. In terms of assembly, interacts with PDZK1. In terms of processing, N-glycosylated. As to expression, expressed in the proximal tubular epithelial cells in kidney.

Its subcellular location is the apical cell membrane. The enzyme catalyses urate(out) + (S)-lactate(in) = urate(in) + (S)-lactate(out). The catalysed reaction is nicotinate(in) + urate(out) = nicotinate(out) + urate(in). It catalyses the reaction urate(out) + n chloride(in) = urate(in) + n chloride(out). It carries out the reaction orotate(out) + nicotinate(in) = orotate(in) + nicotinate(out). Its function is as follows. Electroneutral antiporter that translocates urate across the apical membrane of proximal tubular cells in exchange for monovalent organic or inorganic anions. Involved in renal reabsorption of urate and helps maintaining blood levels of uric acid. Mediates urate uptake by an exchange with organic anions such as (S)-lactate and nicotinate, and inorganic anion Cl(-). Other inorganic anions such as Br(-), I(-) and NO3(-) may also act as counteranions that exchange for urate. Also mediates orotate tubular uptake coupled with nicotinate efflux and to a lesser extent with lactate efflux, therefore displaying a potential role in orotate renal reabsorption. Orotate transport is Cl(-)-dependent. This Rattus norvegicus (Rat) protein is Solute carrier family 22 member 12 (Slc22a12).